A 272-amino-acid chain; its full sequence is 3-methyl-2-oxobutanoate hydroxymethyltransferase (272 aa).

The Mg(2+) site is built by D43 and D82. 3-methyl-2-oxobutanoate-binding positions include 43 to 44, D82, and K112; that span reads DS. E114 serves as a coordination point for Mg(2+). The active-site Proton acceptor is E179.

This sequence belongs to the PanB family. In terms of assembly, homodecamer; pentamer of dimers. The cofactor is Mg(2+).

The protein resides in the cytoplasm. It catalyses the reaction 3-methyl-2-oxobutanoate + (6R)-5,10-methylene-5,6,7,8-tetrahydrofolate + H2O = 2-dehydropantoate + (6S)-5,6,7,8-tetrahydrofolate. The protein operates within cofactor biosynthesis; (R)-pantothenate biosynthesis; (R)-pantoate from 3-methyl-2-oxobutanoate: step 1/2. Functionally, catalyzes the reversible reaction in which hydroxymethyl group from 5,10-methylenetetrahydrofolate is transferred onto alpha-ketoisovalerate to form ketopantoate. The polypeptide is 3-methyl-2-oxobutanoate hydroxymethyltransferase (Staphylococcus epidermidis (strain ATCC 35984 / DSM 28319 / BCRC 17069 / CCUG 31568 / BM 3577 / RP62A)).